We begin with the raw amino-acid sequence, 326 residues long: Type II methyltransferase M.EcoRI (326 aa).

This sequence belongs to the N(4)/N(6)-methyltransferase family. Monomer.

It catalyses the reaction a 2'-deoxyadenosine in DNA + S-adenosyl-L-methionine = an N(6)-methyl-2'-deoxyadenosine in DNA + S-adenosyl-L-homocysteine + H(+). Its function is as follows. A methylase that recognizes the double-stranded sequence 5'-GAATTC-3', methylates A-3 on both strands, and protects the DNA from cleavage by the EcoRI endonuclease. The sequence is that of Type II methyltransferase M.EcoRI (ecoRIM) from Escherichia coli.